The sequence spans 206 residues: Cell division protein SepF (206 aa).

The segment covering glutamate 31–threonine 53 has biased composition (basic and acidic residues). The disordered stretch occupies residues glutamate 31 to aspartate 81. Residues alanine 60–serine 80 are compositionally biased toward low complexity.

Belongs to the SepF family. Homodimer. Interacts with FtsZ.

It is found in the cytoplasm. Cell division protein that is part of the divisome complex and is recruited early to the Z-ring. Probably stimulates Z-ring formation, perhaps through the cross-linking of FtsZ protofilaments. Its function overlaps with FtsA. This Lachnoclostridium phytofermentans (strain ATCC 700394 / DSM 18823 / ISDg) (Clostridium phytofermentans) protein is Cell division protein SepF.